The sequence spans 420 residues: 4-hydroxy-3-methylbut-2-en-1-yl diphosphate synthase (flavodoxin) (420 aa).

Cysteine 307, cysteine 310, cysteine 353, and glutamate 360 together coordinate [4Fe-4S] cluster.

It belongs to the IspG family. The cofactor is [4Fe-4S] cluster.

The catalysed reaction is (2E)-4-hydroxy-3-methylbut-2-enyl diphosphate + oxidized [flavodoxin] + H2O + 2 H(+) = 2-C-methyl-D-erythritol 2,4-cyclic diphosphate + reduced [flavodoxin]. It functions in the pathway isoprenoid biosynthesis; isopentenyl diphosphate biosynthesis via DXP pathway; isopentenyl diphosphate from 1-deoxy-D-xylulose 5-phosphate: step 5/6. In terms of biological role, converts 2C-methyl-D-erythritol 2,4-cyclodiphosphate (ME-2,4cPP) into 1-hydroxy-2-methyl-2-(E)-butenyl 4-diphosphate. This Brucella melitensis biotype 2 (strain ATCC 23457) protein is 4-hydroxy-3-methylbut-2-en-1-yl diphosphate synthase (flavodoxin).